A 69-amino-acid chain; its full sequence is Large ribosomal subunit protein uL29 (69 aa).

The protein belongs to the universal ribosomal protein uL29 family.

The protein is Large ribosomal subunit protein uL29 of Treponema denticola (strain ATCC 35405 / DSM 14222 / CIP 103919 / JCM 8153 / KCTC 15104).